Reading from the N-terminus, the 159-residue chain is Ribosomal RNA large subunit methyltransferase H (159 aa).

The S-adenosyl-L-methionine site is built by Leu76 and Gly108.

Belongs to the RNA methyltransferase RlmH family. As to quaternary structure, homodimer.

The protein localises to the cytoplasm. It carries out the reaction pseudouridine(1915) in 23S rRNA + S-adenosyl-L-methionine = N(3)-methylpseudouridine(1915) in 23S rRNA + S-adenosyl-L-homocysteine + H(+). Functionally, specifically methylates the pseudouridine at position 1915 (m3Psi1915) in 23S rRNA. The sequence is that of Ribosomal RNA large subunit methyltransferase H from Natranaerobius thermophilus (strain ATCC BAA-1301 / DSM 18059 / JW/NM-WN-LF).